The chain runs to 191 residues: UPF0149 protein plu3602 (191 aa).

It belongs to the UPF0149 family.

The polypeptide is UPF0149 protein plu3602 (Photorhabdus laumondii subsp. laumondii (strain DSM 15139 / CIP 105565 / TT01) (Photorhabdus luminescens subsp. laumondii)).